The following is a 493-amino-acid chain: Glycerol kinase (493 aa).

An ADP-binding site is contributed by Thr-12. 3 residues coordinate ATP: Thr-12, Thr-13, and Ser-14. Thr-12 serves as a coordination point for sn-glycerol 3-phosphate. Arg-16 contacts ADP. Sn-glycerol 3-phosphate contacts are provided by Arg-82, Glu-83, Tyr-132, and Asp-239. 5 residues coordinate glycerol: Arg-82, Glu-83, Tyr-132, Asp-239, and Gln-240. Residues Thr-261 and Gly-303 each coordinate ADP. Thr-261, Gly-303, Gln-307, and Gly-402 together coordinate ATP. Gly-402 and Asn-406 together coordinate ADP.

It belongs to the FGGY kinase family.

It catalyses the reaction glycerol + ATP = sn-glycerol 3-phosphate + ADP + H(+). It functions in the pathway polyol metabolism; glycerol degradation via glycerol kinase pathway; sn-glycerol 3-phosphate from glycerol: step 1/1. Its function is as follows. Key enzyme in the regulation of glycerol uptake and metabolism. Catalyzes the phosphorylation of glycerol to yield sn-glycerol 3-phosphate. The chain is Glycerol kinase from Thermococcus onnurineus (strain NA1).